A 417-amino-acid chain; its full sequence is NADH-quinone oxidoreductase subunit D (417 aa).

This sequence belongs to the complex I 49 kDa subunit family. In terms of assembly, NDH-1 is composed of 14 different subunits. Subunits NuoB, C, D, E, F, and G constitute the peripheral sector of the complex.

It localises to the cell inner membrane. It carries out the reaction a quinone + NADH + 5 H(+)(in) = a quinol + NAD(+) + 4 H(+)(out). NDH-1 shuttles electrons from NADH, via FMN and iron-sulfur (Fe-S) centers, to quinones in the respiratory chain. The immediate electron acceptor for the enzyme in this species is believed to be ubiquinone. Couples the redox reaction to proton translocation (for every two electrons transferred, four hydrogen ions are translocated across the cytoplasmic membrane), and thus conserves the redox energy in a proton gradient. The chain is NADH-quinone oxidoreductase subunit D from Acidithiobacillus ferrooxidans (strain ATCC 53993 / BNL-5-31) (Leptospirillum ferrooxidans (ATCC 53993)).